The primary structure comprises 181 residues: Probable integrase/recombinase YoeC (181 aa).

One can recognise a Tyr recombinase domain in the interval 3–176 (IVQPIRSLEK…DEDTTRAAYK (174 aa)). Catalysis depends on residues Arg40, Lys64, His128, Arg131, and His154. Tyr163 (O-(3'-phospho-DNA)-tyrosine intermediate) is an active-site residue.

Belongs to the 'phage' integrase family.

This chain is Probable integrase/recombinase YoeC (yoeC), found in Bacillus subtilis (strain 168).